Reading from the N-terminus, the 41-residue chain is Photosystem I reaction center subunit IX (41 aa).

Residues 7-27 (YLSTAPVVAFAWITITAGLLI) traverse the membrane as a helical segment.

The protein belongs to the PsaJ family.

The protein resides in the plastid. It is found in the chloroplast thylakoid membrane. May help in the organization of the PsaE and PsaF subunits. This chain is Photosystem I reaction center subunit IX, found in Oedogonium cardiacum (Filamentous green alga).